We begin with the raw amino-acid sequence, 473 residues long: Argininosuccinate lyase (473 aa).

The protein belongs to the lyase 1 family. Argininosuccinate lyase subfamily.

It localises to the cytoplasm. The catalysed reaction is 2-(N(omega)-L-arginino)succinate = fumarate + L-arginine. Its pathway is amino-acid biosynthesis; L-arginine biosynthesis; L-arginine from L-ornithine and carbamoyl phosphate: step 3/3. This chain is Argininosuccinate lyase, found in Nocardia farcinica (strain IFM 10152).